The following is a 529-amino-acid chain: T-complex protein 1 subunit delta (529 aa).

This sequence belongs to the TCP-1 chaperonin family. As to quaternary structure, heterooligomeric complex of about 850 to 900 kDa that forms two stacked rings, 12 to 16 nm in diameter.

It localises to the cytoplasm. In terms of biological role, molecular chaperone; assists the folding of proteins upon ATP hydrolysis. Known to play a role, in vitro, in the folding of actin and tubulin. The polypeptide is T-complex protein 1 subunit delta (CCT4) (Eremothecium gossypii (strain ATCC 10895 / CBS 109.51 / FGSC 9923 / NRRL Y-1056) (Yeast)).